A 766-amino-acid chain; its full sequence is FYVE, RhoGEF and PH domain-containing protein 4 (766 aa).

An actin filament-binding region spans residues 1 to 150 (MEESNPAPTS…SSVTNSHDEN (150 aa)). Polar residues-rich tracts occupy residues 43–65 (STMNLNIPQTPRQHGLTSTTPQK), 132–145 (RNETTTDSASSVTN), and 152–161 (CDSSCRTQGT). The segment at 43–167 (STMNLNIPQT…TQGTDLGLPS (125 aa)) is disordered. A DH domain is found at 206–393 (KLHKIATELL…STAASHSNSA (188 aa)). In terms of domain architecture, PH 1 spans 422–521 (ELIKEGQILK…WIKALQESID (100 aa)). The FYVE-type zinc-finger motif lies at 559 to 619 (DNEVTMCMKC…VCKDCYQIMS (61 aa)). Residues Cys565, Cys568, Cys582, Cys585, Cys590, Cys593, Cys611, and Cys614 each contribute to the Zn(2+) site. The 98-residue stretch at 643 to 740 (NSEVCSFLQY…WLKIILLAVT (98 aa)) folds into the PH 2 domain. Phosphoserine occurs at positions 702 and 716. Positions 745 to 766 (DGPSEHLDTLDNLPGPKEKSEC) are disordered.

Homooligomer. As to expression, detected in brain, lung, liver, skeletal muscle, kidney, testis and cultured hippocampal neurons.

The protein localises to the cytoplasm. The protein resides in the cytoskeleton. Its subcellular location is the cell projection. It localises to the filopodium. Activates CDC42, a member of the Ras-like family of Rho- and Rac proteins, by exchanging bound GDP for free GTP. Plays a role in regulating the actin cytoskeleton and cell shape. Activates MAPK8. This is FYVE, RhoGEF and PH domain-containing protein 4 (Fgd4) from Rattus norvegicus (Rat).